The sequence spans 352 residues: MASREDELRNCVVCGDQATGYHFNALTCEGCKGFFRRTVSKSIGPTCPFAGSCEVSKTQRRHCPACRLQKCLDAGMRKDMILSAEALALRRAKQAQRRAQQTPVQLSKEQEELIRTLLGAHTRHMGTMFEQFVQFRPPAHLFIHHQPLPTLAPVLPLVTHFADINTFMVLQVIKFTKDLPVFRSLPIEDQISLLKGAAVEICHIVLNTTFCLQTQNFLCGPLRYTIEDGARVSPTVGFQVEFLELLFHFHGTLRKLQLQEPEYVLLAAMALFSPDRPGVTQRDEIDQLQEEMALTLQSYIKGQQRRPRDRFLYAKLLGLLAELRSINEAYGYQIQHIQGLSAMMPLLQEICS.

The segment at residues 8-83 (LRNCVVCGDQ…AGMRKDMILS (76 aa)) is a DNA-binding region (nuclear receptor). The NR C4-type zinc-finger motif lies at 11–31 (CVVCGDQATGYHFNALTCEGC). Threonine 38 is modified (phosphothreonine; by PKC). Residues 47–71 (CPFAGSCEVSKTQRRHCPACRLQKC) form an NR C4-type zinc finger. The 244-residue stretch at 109–352 (EQEELIRTLL…MMPLLQEICS (244 aa)) folds into the NR LBD domain.

Belongs to the nuclear hormone receptor family. NR1 subfamily. Interacts with ECT2. Heterodimer of NR1I3 and RXR. Interacts with PSMC4. Directly interacts with DNAJC7. The DNAJC7-NR1I3 complex may also include HSP90. Interacts with CRY1. Interacts with CRY2 in a ligand-dependent manner. In terms of processing, phosphorylated at Thr-38 by PKC, dephosphorylation of Thr-38 is required for nuclear translocation and activation. In terms of tissue distribution, predominantly expressed in liver.

It is found in the nucleus. It localises to the cytoplasm. Its subcellular location is the cytoskeleton. In terms of biological role, binds and transactivates the retinoic acid response elements that control expression of the retinoic acid receptor beta 2 and alcohol dehydrogenase 3 genes. Transactivates both the phenobarbital responsive element module of the human CYP2B6 gene and the CYP3A4 xenobiotic response element. The polypeptide is Nuclear receptor subfamily 1 group I member 3 (NR1I3) (Homo sapiens (Human)).